A 178-amino-acid chain; its full sequence is Large ribosomal subunit protein uL6 (178 aa).

This sequence belongs to the universal ribosomal protein uL6 family. In terms of assembly, part of the 50S ribosomal subunit.

In terms of biological role, this protein binds to the 23S rRNA, and is important in its secondary structure. It is located near the subunit interface in the base of the L7/L12 stalk, and near the tRNA binding site of the peptidyltransferase center. The sequence is that of Large ribosomal subunit protein uL6 from Streptococcus pneumoniae serotype 4 (strain ATCC BAA-334 / TIGR4).